The sequence spans 420 residues: Tol-Pal system protein TolB (420 aa).

Residues M1–A21 form the signal peptide.

Belongs to the TolB family. The Tol-Pal system is composed of five core proteins: the inner membrane proteins TolA, TolQ and TolR, the periplasmic protein TolB and the outer membrane protein Pal. They form a network linking the inner and outer membranes and the peptidoglycan layer.

The protein localises to the periplasm. Part of the Tol-Pal system, which plays a role in outer membrane invagination during cell division and is important for maintaining outer membrane integrity. This Wolbachia pipientis wMel protein is Tol-Pal system protein TolB.